Here is an 87-residue protein sequence, read N- to C-terminus: Small ribosomal subunit protein bS20 (87 aa).

This sequence belongs to the bacterial ribosomal protein bS20 family.

Functionally, binds directly to 16S ribosomal RNA. This chain is Small ribosomal subunit protein bS20, found in Beijerinckia indica subsp. indica (strain ATCC 9039 / DSM 1715 / NCIMB 8712).